A 583-amino-acid polypeptide reads, in one-letter code: Zinc finger protein 277 (583 aa).

2 consecutive C2H2-type zinc fingers follow at residues 351–375 (LQCLYCEKTFRDKNTLKDHMRKKQH) and 482–508 (HQCKCYSCHVKFKSKADLRTHMEDTKH).

The protein belongs to the ZNF277 family. Interacts (via zinc-finger domains) with RPS2/40S ribosomal protein S2, perhaps as nascent RPS2 is synthesized during translation; the interaction is direct; the interaction is extra-ribosomal. Interaction with RPS2 competes with the binding of RPS2 to protein arginine methyltransferase PRMT3. Interacts with Polycomb group (PcG) complex protein BMI1. May be part of a complex including at least ZNF277, BMI1 and RNF2/RING2.

Its subcellular location is the nucleus. It is found in the cytoplasm. It localises to the nucleolus. The protein localises to the chromosome. Functionally, probable transcription factor. Involved in modulation of cellular senescence; represses transcription of the tumor suppressor gene INK4A/ARF, perhaps acting via the Polycomb group (PcG) complex PRC1. In Mus musculus (Mouse), this protein is Zinc finger protein 277.